We begin with the raw amino-acid sequence, 190 residues long: NADH dehydrogenase [ubiquinone] iron-sulfur protein 3 (190 aa).

Belongs to the complex I 30 kDa subunit family. Complex I is composed of about 45 different subunits. This is a component of the iron-sulfur (IP) fragment of the enzyme.

It is found in the mitochondrion inner membrane. The enzyme catalyses a ubiquinone + NADH + 5 H(+)(in) = a ubiquinol + NAD(+) + 4 H(+)(out). In terms of biological role, core subunit of the mitochondrial membrane respiratory chain NADH dehydrogenase (Complex I) that is believed to belong to the minimal assembly required for catalysis. Complex I functions in the transfer of electrons from NADH to the respiratory chain. The immediate electron acceptor for the enzyme is believed to be ubiquinone. The protein is NADH dehydrogenase [ubiquinone] iron-sulfur protein 3 (NAD9) of Solanum tuberosum (Potato).